The following is a 147-amino-acid chain: HTH-type transcriptional regulator MgrA (147 aa).

Residues Lys8–His139 enclose the HTH marR-type domain. The segment at residues Val55–Gln78 is a DNA-binding region (H-T-H motif).

It localises to the cytoplasm. Functionally, regulatory protein involved in autolytic activity, multidrug resistance and virulence. Controls autolysis by inactivating LytM, LytN (autolysins) and SarV (autolysis activator) and activating ArlRS, LrgAB and LytSR (autolysis inhibitors). Acts as a dual regulator for resistance to multiple drugs by inactivating NorB and tet38 and activating NorA. Positively controls the expression of virulence accessory gene regulator (agr) to promote alpha-hemolysin (hla) transcription and down-regulates staphylococcal accessory regulator (sarS), leading to repression of surface protein A (spa). Binds directly to hla promoter to augment its activation. Binds to sarS promoter to down-regulate spa expression. This Staphylococcus aureus (strain NCTC 8325 / PS 47) protein is HTH-type transcriptional regulator MgrA (mgrA).